The following is a 634-amino-acid chain: TATA box-binding protein-associated factor RNA polymerase I subunit B (634 aa).

The RRN7-type zinc finger occupies Leu19–Ser51. 4 residues coordinate Zn(2+): Cys21, Cys24, Cys42, and Cys45. The interval Ser51–Pro80 is B-reader. Positions Ala56–Asn117 are disordered. Positions Gln77 to Ala87 are enriched in pro residues. The segment at Thr81–Lys83 is B-linker. The N-terminal cyclin fold stretch occupies residues Pro84–Asp281. The span at Pro88–Pro98 shows a compositional bias: low complexity. A C-terminal cyclin fold region spans residues Cys282 to Leu284.

It belongs to the RRN7/TAF1B family.

The protein resides in the nucleus. It localises to the nucleolus. Component of RNA polymerase I core factor complex that acts as a GTF2B/TFIIB-like factor and plays a key role in multiple steps during transcription initiation such as pre-initiation complex (PIC) assembly and postpolymerase recruitment events in polymerase I (Pol I) transcription. Binds rDNA promoters and plays a role in Pol I recruitment. This is TATA box-binding protein-associated factor RNA polymerase I subunit B from Oryza sativa subsp. indica (Rice).